The primary structure comprises 125 residues: Large ribosomal subunit protein eL32 (125 aa).

Belongs to the eukaryotic ribosomal protein eL32 family.

The chain is Large ribosomal subunit protein eL32 (rpl32e) from Sulfolobus acidocaldarius (strain ATCC 33909 / DSM 639 / JCM 8929 / NBRC 15157 / NCIMB 11770).